The chain runs to 227 residues: Cytochrome c oxidase subunit 2 (227 aa).

At 1–14 the chain is on the mitochondrial intermembrane side; the sequence is MACPVQLGFQDAAS. The helical transmembrane segment at 15 to 45 threads the bilayer; that stretch reads PIMEELTYFHDHTLMIVFLISSLVLYIISLM. Residues 46–59 are Mitochondrial matrix-facing; that stretch reads LTTELTHTSTMDAQ. A helical membrane pass occupies residues 60-87; that stretch reads EVETVWTILPAVILILIALPSLRILYMM. Over 88-227 the chain is Mitochondrial intermembrane; sequence DEITTPSLTL…HFEEWLLAML (140 aa). 6 residues coordinate Cu cation: H161, C196, E198, C200, H204, and M207. Mg(2+) is bound at residue E198.

The protein belongs to the cytochrome c oxidase subunit 2 family. Component of the cytochrome c oxidase (complex IV, CIV), a multisubunit enzyme composed of 14 subunits. The complex is composed of a catalytic core of 3 subunits MT-CO1, MT-CO2 and MT-CO3, encoded in the mitochondrial DNA, and 11 supernumerary subunits COX4I, COX5A, COX5B, COX6A, COX6B, COX6C, COX7A, COX7B, COX7C, COX8 and NDUFA4, which are encoded in the nuclear genome. The complex exists as a monomer or a dimer and forms supercomplexes (SCs) in the inner mitochondrial membrane with NADH-ubiquinone oxidoreductase (complex I, CI) and ubiquinol-cytochrome c oxidoreductase (cytochrome b-c1 complex, complex III, CIII), resulting in different assemblies (supercomplex SCI(1)III(2)IV(1) and megacomplex MCI(2)III(2)IV(2)). Found in a complex with TMEM177, COA6, COX18, COX20, SCO1 and SCO2. Interacts with TMEM177 in a COX20-dependent manner. Interacts with COX20. Interacts with COX16. Requires Cu cation as cofactor.

Its subcellular location is the mitochondrion inner membrane. It catalyses the reaction 4 Fe(II)-[cytochrome c] + O2 + 8 H(+)(in) = 4 Fe(III)-[cytochrome c] + 2 H2O + 4 H(+)(out). Component of the cytochrome c oxidase, the last enzyme in the mitochondrial electron transport chain which drives oxidative phosphorylation. The respiratory chain contains 3 multisubunit complexes succinate dehydrogenase (complex II, CII), ubiquinol-cytochrome c oxidoreductase (cytochrome b-c1 complex, complex III, CIII) and cytochrome c oxidase (complex IV, CIV), that cooperate to transfer electrons derived from NADH and succinate to molecular oxygen, creating an electrochemical gradient over the inner membrane that drives transmembrane transport and the ATP synthase. Cytochrome c oxidase is the component of the respiratory chain that catalyzes the reduction of oxygen to water. Electrons originating from reduced cytochrome c in the intermembrane space (IMS) are transferred via the dinuclear copper A center (CU(A)) of subunit 2 and heme A of subunit 1 to the active site in subunit 1, a binuclear center (BNC) formed by heme A3 and copper B (CU(B)). The BNC reduces molecular oxygen to 2 water molecules using 4 electrons from cytochrome c in the IMS and 4 protons from the mitochondrial matrix. This chain is Cytochrome c oxidase subunit 2 (MT-CO2), found in Cheirogaleus medius (Fat-tailed dwarf lemur).